The following is a 2705-amino-acid chain: Teneurin-1 (2705 aa).

Disordered regions lie at residues 1–73 and 135–222; these read MEQM…STQD and CLSS…TQDS. The region spanning 1–299 is the Teneurin N-terminal domain; the sequence is MEQMDCKPYQ…KPYRCCNWKC (299 aa). The Cytoplasmic segment spans residues 1–305; it reads MEQMDCKPYQ…NWKCTALSAT (305 aa). Positions 32-46 are enriched in basic and acidic residues; sequence DGRKQRQSYDSRETL. A Nuclear localization signal (NLS) motif is present at residues 62–65; it reads RKRK. A compositionally biased stretch (polar residues) spans 135–147; the sequence is CLSSRANSALSLT. Residues 148–157 show a composition bias toward basic and acidic residues; it reads DTDHERKSDG. Pro residues predominate over residues 173-182; sequence PLPPPPPPPH. The Required for interaction with SORBS1 (Ten-1 ICD form) signature appears at 271–278; that stretch reads PPPRPLPR. A helical transmembrane segment spans residues 306–326; it reads AITVTLALLLAYVIAVHLFGL. Residues 327–2705 lie on the Extracellular side of the membrane; sequence TWQLQPVEGQ…FMRQSEIGRR (2379 aa). N414 carries N-linked (GlcNAc...) asparagine glycosylation. 8 consecutive EGF-like domains span residues 509-540, 541-572, 573-605, 606-638, 639-672, 673-702, 703-734, and 735-769; these read VLDD…PDCA, KDSC…ECDV, PEEQ…EICE, EEDC…NCET, SLPI…SDCS, TELC…GPTC, EERT…DHCT, and IDGC…SGCN. 22 disulfide bridges follow: C513–C523, C517–C528, C530–C539, C548–C559, C561–C570, C577–C588, C582–C593, C595–C604, C609–C620, C614–C625, C627–C636, C647–C660, C662–C671, C676–C686, C680–C691, C693–C702, C707–C717, C711–C722, C724–C733, C738–C748, C742–C757, and C759–C768. N878 and N1057 each carry an N-linked (GlcNAc...) asparagine glycan. NHL repeat units follow at residues 1167–1192, 1202–1246, 1272–1316, 1331–1382, and 1461–1504; these read LFAP…VRRI, LELR…AKSL, SHCG…NGMI, LSCD…IAGR, and CFSG…VSRN. The stretch at 1514–1533 is one YD 1 repeat; that stretch reads YEIASPADQELYQFTINGTH. 2 N-linked (GlcNAc...) asparagine glycosylation sites follow: N1530 and N1547. YD repeat units follow at residues 1550 to 1570, 1588 to 1612, 1613 to 1634, and 1635 to 1655; these read YSGE…VHIR, YWLT…ALMT, YPGN…TVYE, and YDSD…SSFH. 5 N-linked (GlcNAc...) asparagine glycosylation sites follow: N1643, N1679, N1737, N1761, and N1822. YD repeat units lie at residues 1825 to 1844, 1845 to 1865, 1866 to 1884, 1885 to 1905, 1913 to 1929, 1930 to 1949, 1950 to 1969, 1972 to 1992, 1995 to 2015, 2065 to 2085, and 2093 to 2113; these read YSHS…EKME, YDPS…WSYT, YLEK…YIFE, YDQS…HALQ, YRNI…FIQD, VTRD…RRVL, YKYS…TQVT, YEES…FICT, YRQT…EGLV, YDLN…FSAN, and YEIL…MGRM. N2125 is a glycosylation site (N-linked (GlcNAc...) asparagine). YD repeat units follow at residues 2133–2153, 2154–2174, 2176–2196, 2208–2228, and 2230–2250; these read YDRD…WRYS, YDLN…LTPL, YDLR…DEDG, YNSN…TVQY, and YDGL…LQFF. Residue N2265 is glycosylated (N-linked (GlcNAc...) asparagine). YD repeat units lie at residues 2276–2293 and 2294–2317; these read YDLQ…GEEY and YVAC…IKEI. The N-linked (GlcNAc...) asparagine glycan is linked to N2582.

The protein belongs to the tenascin family. Teneurin subfamily. Homodimer; disulfide-linked. Heterodimer with other teneurins. Ten-1 ICD interacts with SORBS1 (via third SH3 domain). Interacts with MBD1 isoform 2. In terms of processing, derives from the plasma membrane form by proteolytic processing. Further proteolytic cleavage may be generated. Post-translationally, derives from the plasma membrane form by proteolytic cleavage and translocates to the nucleus. Expressed in the neurons of the developing visual system and in fetal brain.

It is found in the cell membrane. Its subcellular location is the nucleus. It localises to the nucleus speckle. The protein localises to the nucleus matrix. The protein resides in the cytoplasm. It is found in the cytoskeleton. Functionally, involved in neural development, regulating the establishment of proper connectivity within the nervous system. May function as a cellular signal transducer. Its function is as follows. Plays a role in the regulation of neuroplasticity in the limbic system. Mediates a rapid reorganization of actin- and tubulin-based cytoskeleton elements with an increase in dendritic arborization and spine density formation of neurons in the hippocampus and amygdala. Induces BDNF transcription inhibition in neurons. Activates the mitogen-activated protein (MAP) kinase 2 (MEK2) and extracellular signal-regulated kinase (ERK) cascade. Induces gene transcription activation. The polypeptide is Teneurin-1 (TENM1) (Gallus gallus (Chicken)).